A 202-amino-acid chain; its full sequence is Small ribosomal subunit protein uS4c (202 aa).

The region spanning M90 to K151 is the S4 RNA-binding domain.

This sequence belongs to the universal ribosomal protein uS4 family. In terms of assembly, part of the 30S ribosomal subunit. Contacts protein S5. The interaction surface between S4 and S5 is involved in control of translational fidelity.

The protein resides in the plastid. It localises to the chloroplast. In terms of biological role, one of the primary rRNA binding proteins, it binds directly to 16S rRNA where it nucleates assembly of the body of the 30S subunit. Functionally, with S5 and S12 plays an important role in translational accuracy. In Plagiochila adianthoides (Liverwort), this protein is Small ribosomal subunit protein uS4c (rps4).